A 405-amino-acid chain; its full sequence is MTNQTARSSKKERYANLIPMEELHSEKDRLFPFPIYDKLRRESPVRYDPLRDCWDVFKYDDVQFVLKNPKLFSSKRGIQTESILTMDPPKHTKLRALVSRAFTPKAVKQLETRIKDVTAFLLQEARQKSTIDIIEDFAGPLPVIIIAEMLGAPIEDRHLIKTYSDVLVAGAKDSSDKAVADMVHNRRDGHAFLSDYFRDILSKRRAEPKEDLMTMLLQAEIDGEYLTEEQLIGFCILLLVAGNETTTNLIANAVRYLTEDSVVQQQVRQNTDNVANVIEETLRYYSPVQAIGRVATEDTELGGVFIKKGSSVISWIASANRDEDKFCKPDCFKIDRPSYPHLSFGFGIHFCLGAPLARLEANIALSSLLSMSACIEKAAHDEKLEAIPSPFVFGVKRLPVRITFK.

C351 lines the heme pocket.

The protein belongs to the cytochrome P450 family. It depends on heme as a cofactor.

Functionally, cytochromes P450 are a group of heme-thiolate monooxygenases. They oxidize a variety of structurally unrelated compounds, including steroids, fatty acids, and xenobiotics. The polypeptide is Cytochrome P450 109 (cyp109) (Bacillus spizizenii (strain ATCC 23059 / NRRL B-14472 / W23) (Bacillus subtilis subsp. spizizenii)).